The following is an 873-amino-acid chain: Alanine--tRNA ligase (873 aa).

Residues histidine 562, histidine 566, cysteine 663, and histidine 667 each coordinate Zn(2+).

This sequence belongs to the class-II aminoacyl-tRNA synthetase family. The cofactor is Zn(2+).

The protein resides in the cytoplasm. The catalysed reaction is tRNA(Ala) + L-alanine + ATP = L-alanyl-tRNA(Ala) + AMP + diphosphate. Its function is as follows. Catalyzes the attachment of alanine to tRNA(Ala) in a two-step reaction: alanine is first activated by ATP to form Ala-AMP and then transferred to the acceptor end of tRNA(Ala). Also edits incorrectly charged Ser-tRNA(Ala) and Gly-tRNA(Ala) via its editing domain. The protein is Alanine--tRNA ligase of Bordetella petrii (strain ATCC BAA-461 / DSM 12804 / CCUG 43448).